The sequence spans 68 residues: Small integral membrane protein 45 (68 aa).

A helical membrane pass occupies residues 7-27; that stretch reads WFVPVYLVISVLILVGFGACI.

Highly expressed in brain.

The protein localises to the nucleus. It is found in the cytoplasm. It localises to the membrane. In terms of biological role, plays a role in the regulation of neuron maturation. In Homo sapiens (Human), this protein is Small integral membrane protein 45.